We begin with the raw amino-acid sequence, 750 residues long: uncharacterized protein (750 aa).

Residues Asn61, Asn84, Asn115, Asn154, Asn176, Asn197, Asn207, Asn228, Asn241, Asn267, Asn293, Asn299, Asn312, Asn335, Asn351, Asn373, Asn389, and Asn519 are each glycosylated (N-linked (GlcNAc...) asparagine). Phosphoserine is present on residues Ser675 and Ser678. Lys697 is covalently cross-linked (Glycyl lysine isopeptide (Lys-Gly) (interchain with G-Cter in ubiquitin)). Composition is skewed to polar residues over residues 703 to 726 (EITA…SNRT) and 736 to 750 (KDSN…HLVA). The interval 703 to 750 (EITAIDNSSSANNTDVTGSTSNRTELSHPDVTPKDSNGPVNNNAHLVA) is disordered. N-linked (GlcNAc...) asparagine glycans are attached at residues Asn709, Asn714, and Asn724.

In terms of processing, N-glycosylated.

The protein resides in the mitochondrion. This is an uncharacterized protein from Saccharomyces cerevisiae (strain ATCC 204508 / S288c) (Baker's yeast).